A 217-amino-acid polypeptide reads, in one-letter code: T-complex protein 10A homolog 1 (217 aa).

The segment at 1–26 is disordered; it reads MLAGQLEARDPKEGTHPEDPCPGAGA. The segment covering 7–19 has biased composition (basic and acidic residues); the sequence is EARDPKEGTHPED. Residues 69 to 110 adopt a coiled-coil conformation; sequence ADVHGKLRSHIDALREQNMELREKLRALQLQRWKARKKSAAS. The leucine-zipper stretch occupies residues 75-96; sequence LRSHIDALREQNMELREKLRAL. Positions 175–192 are enriched in basic and acidic residues; the sequence is ERISSWKTPPQEKRDKSL. Positions 175–217 are disordered; sequence ERISSWKTPPQEKRDKSLSRRRQDRRATPTGRPTPCAERRGGV.

This sequence belongs to the TCP10 family. Self-associates (via leucine zipper). Interacts (via leucine zipper) with ZIPK/DAPK3 (via leucine zipper). Interacts with MAD4.

It localises to the nucleus. May be involved in transcriptional regulation. Has in vitro transcription inhibition activity. The sequence is that of T-complex protein 10A homolog 1 (TCP10L) from Pan troglodytes (Chimpanzee).